A 127-amino-acid chain; its full sequence is Transthyretin (127 aa).

The residue at position 10 (cysteine 10) is a Sulfocysteine. Lysine 15 is an L-thyroxine binding site. At glutamate 42 the chain carries 4-carboxyglutamate. Glutamate 54 is an L-thyroxine binding site. The N-linked (GlcNAc...) asparagine glycan is linked to asparagine 98. Serine 117 contacts L-thyroxine.

This sequence belongs to the transthyretin family. In terms of assembly, homotetramer. Dimer of dimers. In the homotetramer, subunits assemble around a central channel that can accommodate two ligand molecules. Interacts with RBP4. Sulfonation of the reactive cysteine Cys-10 enhances the stability of the native conformation of TTR, avoiding misassembly of the protein leading to amyloid formation. Detected in serum (at protein level).

The protein resides in the secreted. In terms of biological role, thyroid hormone-binding protein. Probably transports thyroxine from the bloodstream to the brain. In Oryctolagus cuniculus (Rabbit), this protein is Transthyretin (TTR).